The primary structure comprises 345 residues: G-protein coupled receptor str-33 (345 aa).

Residues 1–11 (MTVNLRDLSRT) are Extracellular-facing. A helical transmembrane segment spans residues 12-32 (IAEFAFLTALVCNSLLIYLTA). The Cytoplasmic portion of the chain corresponds to 33–37 (RRTKN). Residues 38–58 (ITGAYKYMIILFALLGLIFSC) traverse the membrane as a helical segment. At 59 to 92 (TEMLARPFVHNFNASFVYFSLSNDLSEFKSLVQM) the chain is on the extracellular side. N-linked (GlcNAc...) asparagine glycosylation occurs at N71. Residues 93–113 (LLVLYSGLYSSLISFVAVQFI) traverse the membrane as a helical segment. Residues 114–133 (YRYMVLVNANLLESWFTGWK) are Cytoplasmic-facing. A helical transmembrane segment spans residues 134 to 154 (LVFWVFYVIFFGFAWSASVYF). Residues 155-204 (CLFPDTYSYNYIRTEFKDVYNIGVDRVAIFILVAYEKHPSSEEYKLRPAS) are Extracellular-facing. Residues 205-225 (VIMIAGTISILVIQYSIMLFC) traverse the membrane as a helical segment. At 226-258 (GASMHRQMNEKLKNFSPDNQRLQKQFFKTLLLQ) the chain is on the cytoplasmic side. The chain crosses the membrane as a helical span at residues 259-279 (ISVPTVLFHMPIFPVLLGPFF). Topologically, residues 280–288 (NFEISAESG) are extracellular. A helical membrane pass occupies residues 289–309 (IIYSLFSLYPPIDGLIIMTVV). The Cytoplasmic segment spans residues 310–345 (TDYRIALTELFLGSHSGAQVEVIPVEVVSILNFSLL).

The protein belongs to the nematode receptor-like protein str family. Detected in ALM and PLM mechanosensory neurons and head neurons.

The protein resides in the cell membrane. Regulates egg-laying and locomotion. Likely to act upstream of goa-1 to suppress 5-hydroxytryptamine (5-HT) biosynthesis in hermaphrodite-specific neurons (HSNs) through inhibition of tph-1 transcription. The chain is G-protein coupled receptor str-33 from Caenorhabditis elegans.